A 225-amino-acid chain; its full sequence is Cytidylate kinase (225 aa).

Gly-11–Thr-19 serves as a coordination point for ATP.

It belongs to the cytidylate kinase family. Type 1 subfamily.

Its subcellular location is the cytoplasm. The catalysed reaction is CMP + ATP = CDP + ADP. It catalyses the reaction dCMP + ATP = dCDP + ADP. The polypeptide is Cytidylate kinase (Bacillus cytotoxicus (strain DSM 22905 / CIP 110041 / 391-98 / NVH 391-98)).